We begin with the raw amino-acid sequence, 217 residues long: GTP cyclohydrolase 1 (217 aa).

3 residues coordinate Zn(2+): Cys109, His112, and Cys180.

It belongs to the GTP cyclohydrolase I family. Toroid-shaped homodecamer, composed of two pentamers of five dimers.

The enzyme catalyses GTP + H2O = 7,8-dihydroneopterin 3'-triphosphate + formate + H(+). The protein operates within cofactor biosynthesis; 7,8-dihydroneopterin triphosphate biosynthesis; 7,8-dihydroneopterin triphosphate from GTP: step 1/1. The protein is GTP cyclohydrolase 1 of Vibrio cholerae serotype O1 (strain ATCC 39315 / El Tor Inaba N16961).